The sequence spans 860 residues: Leucine--tRNA ligase (860 aa).

The short motif at 42 to 52 (PYPSGRLHMGH) is the 'HIGH' region element. Residues 619 to 623 (KMSKS) carry the 'KMSKS' region motif. An ATP-binding site is contributed by Lys-622.

Belongs to the class-I aminoacyl-tRNA synthetase family.

Its subcellular location is the cytoplasm. It carries out the reaction tRNA(Leu) + L-leucine + ATP = L-leucyl-tRNA(Leu) + AMP + diphosphate. This Salmonella typhi protein is Leucine--tRNA ligase.